Here is a 102-residue protein sequence, read N- to C-terminus: Small ribosomal subunit protein uS10 (102 aa).

This sequence belongs to the universal ribosomal protein uS10 family. As to quaternary structure, part of the 30S ribosomal subunit.

Functionally, involved in the binding of tRNA to the ribosomes. The polypeptide is Small ribosomal subunit protein uS10 (Clostridium perfringens (strain ATCC 13124 / DSM 756 / JCM 1290 / NCIMB 6125 / NCTC 8237 / Type A)).